Reading from the N-terminus, the 218-residue chain is Non-structural protein NS3 (218 aa).

This sequence belongs to the orbivirus NS3 family.

In terms of biological role, may play a role in the release of virions from infected cells. This chain is Non-structural protein NS3 (Segment-10), found in Camelus dromedarius (Dromedary).